We begin with the raw amino-acid sequence, 97 residues long: Large ribosomal subunit protein eL37 (97 aa).

N6-acetyllysine is present on Lys10. Residues Cys19, Cys22, Cys34, and Cys37 each contribute to the Zn(2+) site. The C4-type zinc finger occupies 19–37 (CRRCGSKAYHLQKSTCGKC). Phosphoserine is present on residues Ser96 and Ser97.

Belongs to the eukaryotic ribosomal protein eL37 family. As to quaternary structure, component of the large ribosomal subunit.

Its subcellular location is the cytoplasm. In terms of biological role, component of the large ribosomal subunit. The ribosome is a large ribonucleoprotein complex responsible for the synthesis of proteins in the cell. The chain is Large ribosomal subunit protein eL37 (RPL37) from Bos taurus (Bovine).